A 622-amino-acid chain; its full sequence is Pentatricopeptide repeat-containing protein At5g06540 (622 aa).

PPR repeat units follow at residues 81–115, 116–150, 151–181, 182–212, 213–247, 248–282, 283–313, 314–348, 349–384, and 385–419; these read NLFVFNLLIRCFSTGAEPSKAFGFYTQMLKSRIWP, DNITFPFLIKASSEMECVLVGEQTHSQIVRFGFQN, DVYVENSLVHMYANCGFIAAAGRIFGQMGFR, DVVSWTSMVAGYCKCGMVENAREMFDEMPHR, NLFTWSIMINGYAKNNCFEKAIDLFEFMKREGVVA, NETVMVSVISSCAHLGALEFGERAYEYVVKSHMTV, NLILGTALVDMFWRCGDIEKAIHVFEGLPET, DSLSWSSIIKGLAVHGHAHKAMHYFSQMISLGFIP, RDVTFTAVLSACSHGGLVEKGLEIYENMKKDHGIEP, and RLEHYGCIVDMLGRAGKLAEAENFILKMHVKPNAP. The tract at residues 420 to 495 is type E motif; it reads ILGALLGACK…PPGWSLIEID (76 aa). The segment at 496 to 527 is type E(+) motif; it reads GKINKFTMGDDQKHPEMGKIRRKWEEILGKIR. Residues 528 to 622 are type DYW motif; it reads LIGYKGNTGD…NGVCSCRDYW (95 aa).

It belongs to the PPR family. PCMP-H subfamily.

This chain is Pentatricopeptide repeat-containing protein At5g06540 (PCMP-H88), found in Arabidopsis thaliana (Mouse-ear cress).